The sequence spans 531 residues: O-phosphoserine--tRNA(Cys) ligase (531 aa).

Residues 189–191 (HMT), 234–236 (SAS), 276–277 (YY), and Asn-319 contribute to the substrate site.

The protein belongs to the class-II aminoacyl-tRNA synthetase family. O-phosphoseryl-tRNA(Cys) synthetase subfamily. Homotetramer. Interacts with SepCysS.

The enzyme catalyses tRNA(Cys) + O-phospho-L-serine + ATP = O-phospho-L-seryl-tRNA(Cys) + AMP + diphosphate. Functionally, catalyzes the attachment of O-phosphoserine (Sep) to tRNA(Cys). This chain is O-phosphoserine--tRNA(Cys) ligase, found in Methanoculleus marisnigri (strain ATCC 35101 / DSM 1498 / JR1).